Here is a 79-residue protein sequence, read N- to C-terminus: CDC42 small effector protein 1-A (79 aa).

Residues C10 and C11 are each lipidated (S-palmitoyl cysteine). In terms of domain architecture, CRIB spans 30–43 (IGEPMNFVHLTHVG).

Belongs to the CDC42SE/SPEC family.

It is found in the cytoplasm. The protein resides in the cytoskeleton. The protein localises to the cell membrane. In terms of biological role, probably involved in the organization of the actin cytoskeleton by acting downstream of CDC42, inducing actin filament assembly. The protein is CDC42 small effector protein 1-A (cdc42se1-a) of Xenopus laevis (African clawed frog).